Consider the following 447-residue polypeptide: Ion-translocating oxidoreductase complex subunit C (447 aa).

2 4Fe-4S ferredoxin-type domains span residues 359 to 389 (AEVLRDEATVCIHCARCVDVCPMNLLPGRIA) and 399 to 430 (RCREYFALNCIECGECAVVCPAKRHLVQLIRY). Positions 369, 372, 375, 379, 408, 411, 414, and 418 each coordinate [4Fe-4S] cluster.

It belongs to the 4Fe4S bacterial-type ferredoxin family. RnfC subfamily. As to quaternary structure, the Rnf complex is probably composed of eight subunits, including RnfA, RnfB, RnfC, RnfD, RnfE and RnfG. [4Fe-4S] cluster is required as a cofactor.

The protein localises to the cell membrane. In terms of biological role, part of a membrane-bound complex that couples electron transfer with translocation of ions across the membrane. Catalyzes Na(+) transport, most probably coupled to electron transfer from reduced ferredoxin to methanophenazine and heterodisulfide reductase. Involved in heterodisulfide reduction during methanogenesis from acetate. This chain is Ion-translocating oxidoreductase complex subunit C, found in Methanosarcina acetivorans (strain ATCC 35395 / DSM 2834 / JCM 12185 / C2A).